The following is a 246-amino-acid chain: Bis(5'-nucleosyl)-tetraphosphatase PrpE [asymmetrical] (246 aa).

The protein belongs to the PrpE family. It depends on Ni(2+) as a cofactor.

The catalysed reaction is P(1),P(4)-bis(5'-guanosyl) tetraphosphate + H2O = GMP + GTP + 2 H(+). Its function is as follows. Asymmetrically hydrolyzes Ap4p to yield AMP and ATP. The protein is Bis(5'-nucleosyl)-tetraphosphatase PrpE [asymmetrical] of Bacillus cereus (strain ATCC 10987 / NRS 248).